Consider the following 310-residue polypeptide: Carbamate kinase (310 aa).

It belongs to the carbamate kinase family. Homodimer.

The protein localises to the cytoplasm. The enzyme catalyses hydrogencarbonate + NH4(+) + ATP = carbamoyl phosphate + ADP + H2O + H(+). Its pathway is amino-acid degradation; L-arginine degradation via ADI pathway. The chain is Carbamate kinase from Haemophilus influenzae (strain ATCC 51907 / DSM 11121 / KW20 / Rd).